Reading from the N-terminus, the 403-residue chain is Argininosuccinate synthase (403 aa).

10-18 (AYSGGLDTS) is a binding site for ATP. Tyr87 contributes to the L-citrulline binding site. Gly117 is a binding site for ATP. The L-aspartate site is built by Thr119, Asn123, and Asp124. Residue Asn123 participates in L-citrulline binding. The L-citrulline site is built by Arg127, Ser175, Ser184, Glu260, and Tyr272.

This sequence belongs to the argininosuccinate synthase family. Type 1 subfamily. In terms of assembly, homotetramer.

Its subcellular location is the cytoplasm. It carries out the reaction L-citrulline + L-aspartate + ATP = 2-(N(omega)-L-arginino)succinate + AMP + diphosphate + H(+). The protein operates within amino-acid biosynthesis; L-arginine biosynthesis; L-arginine from L-ornithine and carbamoyl phosphate: step 2/3. This chain is Argininosuccinate synthase, found in Bacillus pumilus (strain SAFR-032).